Reading from the N-terminus, the 205-residue chain is Sarcosine oxidase subunit gamma (205 aa).

It belongs to the SoxG family. As to quaternary structure, heterotetramer composed of subunits alpha (SoxA), beta (SoxB), gamma (SoxG) and delta (SoxD).

It is found in the cytoplasm. The catalysed reaction is sarcosine + (6S)-5,6,7,8-tetrahydrofolate + O2 = (6R)-5,10-methylene-5,6,7,8-tetrahydrofolate + glycine + H2O2. It catalyses the reaction sarcosine + O2 + H2O = formaldehyde + glycine + H2O2. With respect to regulation, inhibited by Zn(2+), Cu(2+), Cd(2+), Hg(2+), Ag(+), p-chloromercuribenzoate (p-CMB), iodoacetamide, N-ethylmaleimide, CN(-), o-phenanthroline and sodium lauryl sulfate. Its function is as follows. In the presence of tetrahydrofolate, catalyzes the oxidative demethylation of sarcosine to yield glycine, 5,10-methylenetetrahydrofolate and hydrogen peroxide. In the absence of tetrahydrofolate, catalyzes the oxidative demethylation of sarcosine to yield glycine, formaldehyde and hydrogen peroxide. Can also use N-methyl-L-alanine and N-ethyl-L-glycine. Is very specific for oxygen as an acceptor. This chain is Sarcosine oxidase subunit gamma, found in Corynebacterium sp. (strain U-96).